A 254-amino-acid chain; its full sequence is uncharacterized protein (254 aa).

Helical transmembrane passes span 41-61 (LFVF…IKII), 64-84 (ILQA…EYFF), 91-111 (IYCG…LYIL), 125-145 (LLIS…FVLA), 146-166 (PAAL…LWSF), 172-192 (FILL…IQLL), 204-224 (MIRA…ILTP), and 232-252 (LIMS…LLVL).

It belongs to the TatC family.

Its subcellular location is the plastid. It is found in the chloroplast membrane. This is an uncharacterized protein from Pyropia yezoensis (Susabi-nori).